A 209-amino-acid polypeptide reads, in one-letter code: Large ribosomal subunit protein uL4 (209 aa).

A disordered region spans residues 47–72 (TSSTKTRSEVRGSSKKPWKQKGTGRA). Residues 59–72 (SSKKPWKQKGTGRA) show a composition bias toward basic residues.

The protein belongs to the universal ribosomal protein uL4 family. Part of the 50S ribosomal subunit.

Its function is as follows. One of the primary rRNA binding proteins, this protein initially binds near the 5'-end of the 23S rRNA. It is important during the early stages of 50S assembly. It makes multiple contacts with different domains of the 23S rRNA in the assembled 50S subunit and ribosome. Forms part of the polypeptide exit tunnel. This Borreliella burgdorferi (strain ZS7) (Borrelia burgdorferi) protein is Large ribosomal subunit protein uL4.